The sequence spans 237 residues: 2,3-bisphosphoglycerate-dependent phosphoglycerate mutase (237 aa).

Substrate is bound by residues 8–15 (RHGQSQWN), 21–22 (TG), Arg60, 87–90 (ERHY), Lys98, 114–115 (RR), and 180–181 (GN). His9 functions as the Tele-phosphohistidine intermediate in the catalytic mechanism. Catalysis depends on Glu87, which acts as the Proton donor/acceptor.

It belongs to the phosphoglycerate mutase family. BPG-dependent PGAM subfamily. In terms of assembly, homodimer.

It carries out the reaction (2R)-2-phosphoglycerate = (2R)-3-phosphoglycerate. It participates in carbohydrate degradation; glycolysis; pyruvate from D-glyceraldehyde 3-phosphate: step 3/5. Functionally, catalyzes the interconversion of 2-phosphoglycerate and 3-phosphoglycerate. The sequence is that of 2,3-bisphosphoglycerate-dependent phosphoglycerate mutase from Caulobacter sp. (strain K31).